The following is a 322-amino-acid chain: Ferredoxin--NADP reductase (322 aa).

Positions 37, 45, 50, 91, 128, and 290 each coordinate FAD.

This sequence belongs to the ferredoxin--NADP reductase type 2 family. As to quaternary structure, homodimer. Requires FAD as cofactor.

The enzyme catalyses 2 reduced [2Fe-2S]-[ferredoxin] + NADP(+) + H(+) = 2 oxidized [2Fe-2S]-[ferredoxin] + NADPH. The chain is Ferredoxin--NADP reductase from Malacoplasma penetrans (strain HF-2) (Mycoplasma penetrans).